The following is a 150-amino-acid chain: Large ribosomal subunit protein uL13 (150 aa).

It belongs to the universal ribosomal protein uL13 family. In terms of assembly, part of the 50S ribosomal subunit.

Its function is as follows. This protein is one of the early assembly proteins of the 50S ribosomal subunit, although it is not seen to bind rRNA by itself. It is important during the early stages of 50S assembly. The chain is Large ribosomal subunit protein uL13 from Chlorobium phaeobacteroides (strain BS1).